Reading from the N-terminus, the 371-residue chain is Queuine tRNA-ribosyltransferase (371 aa).

Catalysis depends on D90, which acts as the Proton acceptor. Residues 90 to 94 (DSGGF), D144, Q189, and G215 contribute to the substrate site. The tract at residues 246–252 (GVGTPEN) is RNA binding. The active-site Nucleophile is the D265. An RNA binding; important for wobble base 34 recognition region spans residues 270 to 274 (TRNAR). Zn(2+) is bound by residues C303, C305, C308, and H334.

Belongs to the queuine tRNA-ribosyltransferase family. Homodimer. Within each dimer, one monomer is responsible for RNA recognition and catalysis, while the other monomer binds to the replacement base PreQ1. It depends on Zn(2+) as a cofactor.

It carries out the reaction 7-aminomethyl-7-carbaguanine + guanosine(34) in tRNA = 7-aminomethyl-7-carbaguanosine(34) in tRNA + guanine. It participates in tRNA modification; tRNA-queuosine biosynthesis. In terms of biological role, catalyzes the base-exchange of a guanine (G) residue with the queuine precursor 7-aminomethyl-7-deazaguanine (PreQ1) at position 34 (anticodon wobble position) in tRNAs with GU(N) anticodons (tRNA-Asp, -Asn, -His and -Tyr). Catalysis occurs through a double-displacement mechanism. The nucleophile active site attacks the C1' of nucleotide 34 to detach the guanine base from the RNA, forming a covalent enzyme-RNA intermediate. The proton acceptor active site deprotonates the incoming PreQ1, allowing a nucleophilic attack on the C1' of the ribose to form the product. After dissociation, two additional enzymatic reactions on the tRNA convert PreQ1 to queuine (Q), resulting in the hypermodified nucleoside queuosine (7-(((4,5-cis-dihydroxy-2-cyclopenten-1-yl)amino)methyl)-7-deazaguanosine). The sequence is that of Queuine tRNA-ribosyltransferase from Helicobacter acinonychis (strain Sheeba).